Reading from the N-terminus, the 97-residue chain is Small ribosomal subunit protein bS6 (97 aa).

This sequence belongs to the bacterial ribosomal protein bS6 family.

Functionally, binds together with bS18 to 16S ribosomal RNA. This is Small ribosomal subunit protein bS6 from Dictyoglomus turgidum (strain DSM 6724 / Z-1310).